The sequence spans 128 residues: Small ribosomal subunit protein uS9c (128 aa).

The segment at 106 to 128 (SRIKERKKYGLKKARKAPQFSKR) is disordered. Residues 109–128 (KERKKYGLKKARKAPQFSKR) show a composition bias toward basic residues.

Belongs to the universal ribosomal protein uS9 family.

The protein localises to the plastid. The protein resides in the chloroplast. This Cyanidium caldarium (Red alga) protein is Small ribosomal subunit protein uS9c (rps9).